A 469-amino-acid chain; its full sequence is Biotin synthase (469 aa).

Residues 51–278 enclose the Radical SAM core domain; it reads MTVKVNYLVN…DKEIRMAGGR (228 aa). Cysteine 66, cysteine 70, and cysteine 73 together coordinate [4Fe-4S] cluster. Cysteine 110, cysteine 143, cysteine 203, and arginine 273 together coordinate [2Fe-2S] cluster. Residues 326–469 are disordered; the sequence is AGPDPSRDRH…GAGTSVAPNA (144 aa). 2 stretches are compositionally biased toward low complexity: residues 363–384 and 405–428; these read GSAAGSSSGDGSAPDGGRAPAD and AGGPARTRSAAASSAPTGAGMSPA.

It belongs to the radical SAM superfamily. Biotin synthase family. In terms of assembly, homodimer. The cofactor is [4Fe-4S] cluster. [2Fe-2S] cluster serves as cofactor.

The catalysed reaction is (4R,5S)-dethiobiotin + (sulfur carrier)-SH + 2 reduced [2Fe-2S]-[ferredoxin] + 2 S-adenosyl-L-methionine = (sulfur carrier)-H + biotin + 2 5'-deoxyadenosine + 2 L-methionine + 2 oxidized [2Fe-2S]-[ferredoxin]. It participates in cofactor biosynthesis; biotin biosynthesis; biotin from 7,8-diaminononanoate: step 2/2. Catalyzes the conversion of dethiobiotin (DTB) to biotin by the insertion of a sulfur atom into dethiobiotin via a radical-based mechanism. This is Biotin synthase from Kocuria rhizophila (strain ATCC 9341 / DSM 348 / NBRC 103217 / DC2201).